A 229-amino-acid polypeptide reads, in one-letter code: ATP synthase subunit a (229 aa).

6 helical membrane passes run 25 to 45, 82 to 102, 104 to 124, 142 to 162, 181 to 201, and 202 to 222; these read ADAV…SIAA, FFPL…IGLI, GFFP…VVFV, FLGP…IGHL, LVLI…MMLM, and GVLV…IYIQ.

Belongs to the ATPase A chain family. As to quaternary structure, F-type ATPases have 2 components, CF(1) - the catalytic core - and CF(0) - the membrane proton channel. CF(1) has five subunits: alpha(3), beta(3), gamma(1), delta(1), epsilon(1). CF(0) has three main subunits: a(1), b(2) and c(9-12). The alpha and beta chains form an alternating ring which encloses part of the gamma chain. CF(1) is attached to CF(0) by a central stalk formed by the gamma and epsilon chains, while a peripheral stalk is formed by the delta and b chains.

The protein localises to the cell inner membrane. Functionally, key component of the proton channel; it plays a direct role in the translocation of protons across the membrane. This Geobacter sp. (strain M21) protein is ATP synthase subunit a.